A 332-amino-acid chain; its full sequence is MKKLYDQYERLHDYVRISITDRCNLRCVYCMPKEGLPFFPTDRVLSQDEIVQLITNFAQLGVHKVRITGGEPLLRTDVVDIVRRIKEIDGIEDVSITTNGLFLAKKAKALKEAGLDRLNISLDTFKPEVYKEITRGGNINQVLDGIATASALHFKKIKLNIVLIRGQNDDELLDFINYTKDHDVNVRFIEFMPIGNSLEEWKQEYVALDSVFDLCKQAGLDYHPIDLAGNGPSDNYQVEGYTGSFGLIHPISSKFCENCNRLRITADGYIKACLYWNEEINVRKLIYDFDAFKAGVQRALDNKPLNHEMAMKTTDRIIDKAPTWRHMSQIGG.

Positions 7–221 (QYERLHDYVR…FDLCKQAGLD (215 aa)) constitute a Radical SAM core domain. Arginine 16 contributes to the GTP binding site. [4Fe-4S] cluster contacts are provided by cysteine 23 and cysteine 27. S-adenosyl-L-methionine is bound at residue tyrosine 29. Cysteine 30 contacts [4Fe-4S] cluster. Residue arginine 66 participates in GTP binding. Glycine 70 provides a ligand contact to S-adenosyl-L-methionine. Threonine 97 is a binding site for GTP. Serine 121 serves as a coordination point for S-adenosyl-L-methionine. Lysine 158 is a binding site for GTP. Methionine 192 is a binding site for S-adenosyl-L-methionine. Residues cysteine 256 and cysteine 259 each contribute to the [4Fe-4S] cluster site. A GTP-binding site is contributed by 261-263 (RLR). Cysteine 273 lines the [4Fe-4S] cluster pocket.

The protein belongs to the radical SAM superfamily. MoaA family. In terms of assembly, monomer and homodimer. [4Fe-4S] cluster serves as cofactor.

The enzyme catalyses GTP + AH2 + S-adenosyl-L-methionine = (8S)-3',8-cyclo-7,8-dihydroguanosine 5'-triphosphate + 5'-deoxyadenosine + L-methionine + A + H(+). It participates in cofactor biosynthesis; molybdopterin biosynthesis. Catalyzes the cyclization of GTP to (8S)-3',8-cyclo-7,8-dihydroguanosine 5'-triphosphate. In Limosilactobacillus fermentum (strain NBRC 3956 / LMG 18251) (Lactobacillus fermentum), this protein is GTP 3',8-cyclase.